A 1509-amino-acid chain; its full sequence is DNA-directed RNA polymerase subunit beta' (1509 aa).

Zn(2+) contacts are provided by Cys75, Cys77, Cys90, and Cys93. 3 residues coordinate Mg(2+): Asp474, Asp476, and Asp478. Zn(2+) is bound by residues Cys804, Cys878, Cys885, and Cys888.

Belongs to the RNA polymerase beta' chain family. In terms of assembly, the RNAP catalytic core consists of 2 alpha, 1 beta, 1 beta' and 1 omega subunit. When a sigma factor is associated with the core the holoenzyme is formed, which can initiate transcription. The cofactor is Mg(2+). It depends on Zn(2+) as a cofactor.

It carries out the reaction RNA(n) + a ribonucleoside 5'-triphosphate = RNA(n+1) + diphosphate. Its function is as follows. DNA-dependent RNA polymerase catalyzes the transcription of DNA into RNA using the four ribonucleoside triphosphates as substrates. In Sulfurovum sp. (strain NBC37-1), this protein is DNA-directed RNA polymerase subunit beta'.